Here is a 555-residue protein sequence, read N- to C-terminus: MEYDYIIIGAGSAGNVLATRLTEDADVSVLLLEAGGPDYRMDFRTQMPAALAFPLQGRRYNWAYETDPEPHMNNRRMECGRGKGLGGSSLINGMCYIRGNAMDFDNWAKAPGLEDWSYLDCLPYFRKAETRDIGPNDFHGGDGPVSVTTPKAGNNELFHAMVEAGVQAGYPRTEDLNGYQQEGFGPMDRTVTPKGRRASTARGYLDQARSRPNLKIVTHALTDRIRFDGKRAVGVDYLQGEAKDVTSARARREVLLCAGAIASPQILQRSGVGPAALLNRLDIDLVHELPGVGENLQDHLEMYLQYACKKPVSLYPALQWFNQPKIGAEWLFNGSGIGASNQFEAGGFIRSREEFAWPNIQYHFLPVAINYNGSNAVKEHGFQAHVGSMRSPSRGRVQVKSKDPRQHPSILFNYMATEQDWQEFRDAIRITREIMAQPALDEYRGREISPGPEVQTDEQLDAFVREHAETAFHPSCSCKMGEDEMAVVDGQGRVHGLEGLRVVDASIMPLIITGNLNATTIMIAEKIADRIRQRTPLPRSTAEYYVAGNAPARKQ.

Position 4–33 (4–33 (DYIIIGAGSAGNVLATRLTEDADVSVLLLE)) interacts with FAD. The disordered stretch occupies residues 180 to 202 (QQEGFGPMDRTVTPKGRRASTAR). The active-site Proton acceptor is the H473.

The protein belongs to the GMC oxidoreductase family. The cofactor is FAD.

It catalyses the reaction choline + A = betaine aldehyde + AH2. The catalysed reaction is betaine aldehyde + NAD(+) + H2O = glycine betaine + NADH + 2 H(+). The protein operates within amine and polyamine biosynthesis; betaine biosynthesis via choline pathway; betaine aldehyde from choline (cytochrome c reductase route): step 1/1. Functionally, involved in the biosynthesis of the osmoprotectant glycine betaine. Catalyzes the oxidation of choline to betaine aldehyde and betaine aldehyde to glycine betaine at the same rate. This is Oxygen-dependent choline dehydrogenase from Serratia proteamaculans (strain 568).